The sequence spans 222 residues: Glutathione S-transferase U21 (222 aa).

The GST N-terminal domain occupies alanine 3 to asparagine 83. Residues serine 13 to methionine 14, asparagine 40 to lysine 41, threonine 54 to isoleucine 55, and glutamate 67 to serine 68 contribute to the glutathione site. The GST C-terminal domain maps to aspartate 89–tyrosine 211.

Belongs to the GST superfamily. Tau family.

It is found in the cytoplasm. The protein localises to the cytosol. The enzyme catalyses RX + glutathione = an S-substituted glutathione + a halide anion + H(+). May be involved in the conjugation of reduced glutathione to a wide number of exogenous and endogenous hydrophobic electrophiles and have a detoxification role against certain herbicides. The protein is Glutathione S-transferase U21 (GSTU21) of Arabidopsis thaliana (Mouse-ear cress).